Consider the following 225-residue polypeptide: Cytidylate kinase (225 aa).

11–19 (GPAAAGKST) lines the ATP pocket.

The protein belongs to the cytidylate kinase family. Type 1 subfamily.

The protein localises to the cytoplasm. It carries out the reaction CMP + ATP = CDP + ADP. It catalyses the reaction dCMP + ATP = dCDP + ADP. In Bacillus cereus (strain G9842), this protein is Cytidylate kinase.